We begin with the raw amino-acid sequence, 795 residues long: Phenylalanine--tRNA ligase beta subunit (795 aa).

The tRNA-binding domain maps to 39-148 (AGSFHGVVVG…ADAPIGTDIR (110 aa)). The B5 domain occupies 401–476 (PKRATITLRR…RVYGYNNIPD (76 aa)). Residues Asp-454, Asp-460, Glu-463, and Glu-464 each coordinate Mg(2+). The 94-residue stretch at 701 to 794 (SRFPANRRDI…LKERFQASLR (94 aa)) folds into the FDX-ACB domain.

The protein belongs to the phenylalanyl-tRNA synthetase beta subunit family. Type 1 subfamily. Tetramer of two alpha and two beta subunits. Mg(2+) serves as cofactor.

It is found in the cytoplasm. It carries out the reaction tRNA(Phe) + L-phenylalanine + ATP = L-phenylalanyl-tRNA(Phe) + AMP + diphosphate + H(+). This is Phenylalanine--tRNA ligase beta subunit from Shigella sonnei (strain Ss046).